A 119-amino-acid polypeptide reads, in one-letter code: Large ribosomal subunit protein uL18 (119 aa).

The protein belongs to the universal ribosomal protein uL18 family. Part of the 50S ribosomal subunit; part of the 5S rRNA/L5/L18/L25 subcomplex. Contacts the 5S and 23S rRNAs.

In terms of biological role, this is one of the proteins that bind and probably mediate the attachment of the 5S RNA into the large ribosomal subunit, where it forms part of the central protuberance. The chain is Large ribosomal subunit protein uL18 from Borrelia recurrentis (strain A1).